A 37-amino-acid polypeptide reads, in one-letter code: Protamine Z3 (37 aa).

The segment at 1-37 (ARSRSRRSYGRGRRRGGRRRRRRRRRRRGGRRGRRSR) is disordered.

As to expression, testis.

The protein resides in the nucleus. It localises to the chromosome. Its function is as follows. Protamines substitute for histones in the chromatin of sperm during the haploid phase of spermatogenesis. They compact sperm DNA into a highly condensed, stable and inactive complex. The protein is Protamine Z3 of Scyliorhinus canicula (Small-spotted catshark).